A 469-amino-acid polypeptide reads, in one-letter code: Keratin, type II cytoskeletal 7 (469 aa).

Position 2 is an N-acetylserine (Ser-2). Phosphoserine occurs at positions 2, 6, and 7. Positions 2-90 are head; sequence SIHFSSPVFT…DPSLQRVRQE (89 aa). The O-linked (GlcNAc) serine glycan is linked to Ser-12. At Arg-20 the chain carries Dimethylated arginine; alternate. The residue at position 20 (Arg-20) is an Omega-N-methylarginine; alternate. Phosphoserine is present on residues Ser-53, Ser-71, and Ser-83. A coil 1A region spans residues 90 to 126; sequence EEREQIKTLNNKFASFIDKVRFLEQQNKLLETKWTLL. Positions 91 to 403 constitute an IF rod domain; it reads EREQIKTLNN…KLLEGEESRL (313 aa). Phosphothreonine is present on Thr-97. Positions 127–144 are linker 1; it reads QEQKSAKSSRLPDIFEAQ. A Glycyl lysine isopeptide (Lys-Gly) (interchain with G-Cter in SUMO2) cross-link involves residue Lys-130. Residues 145-236 form a coil 1B region; that stretch reads IAGLRGQLEA…TLNETELTEL (92 aa). Lys-179 carries the post-translational modification N6-acetyllysine. The segment at 237–260 is linker 12; that stretch reads QSQISDTSVVLSMDNSRSLDLDGI. Phosphoserine occurs at positions 252 and 254. A coil 2 region spans residues 261–399; sequence IAEVKAQYEE…ATYRKLLEGE (139 aa). Residues Lys-265 and Lys-286 each participate in a glycyl lysine isopeptide (Lys-Gly) (interchain with G-Cter in SUMO2) cross-link. Thr-289 carries the post-translational modification Phosphothreonine. Residues Lys-296 and Lys-331 each participate in a glycyl lysine isopeptide (Lys-Gly) (interchain with G-Cter in SUMO2) cross-link. Positions 400 to 469 are tail; it reads ESRLAGDGVG…ASASRRSARN (70 aa).

Belongs to the intermediate filament family. Heterotetramer of two type I and two type II keratins. Interacts with eukaryotic translation initiator factor 3 (eIF3) subunit EIF3S10. Interacts with GPER1. Post-translationally, arg-20 is dimethylated, probably to asymmetric dimethylarginine.

Functionally, blocks interferon-dependent interphase and stimulates DNA synthesis in cells. This is Keratin, type II cytoskeletal 7 from Pan troglodytes (Chimpanzee).